Consider the following 213-residue polypeptide: MKPYQRQFIEFALSKQVLKFGEFTLKSGRKSPYFFNAGLFNTGRDLALLGRFYAEALVDSGIEFDLLFGPAYKGIPIATTTAVALAEHHDLDLPYCFNRKEAKNHGEGGNLVGSALQGRVMLVDDVITAGTAIRESMEIIQANGATLAGVLISLDRQERGRSEISAIQEVERDYNCKVISIITLKDLIAYLEEKPEMAEHLAAVKAYREEFGV.

Lys26 is a binding site for 5-phospho-alpha-D-ribose 1-diphosphate. 34-35 (FF) contributes to the orotate binding site. 5-phospho-alpha-D-ribose 1-diphosphate-binding positions include 72 to 73 (YK), Arg99, Lys100, Lys103, His105, and 124 to 132 (DDVITAGTA). Residues Thr128 and Arg156 each contribute to the orotate site.

The protein belongs to the purine/pyrimidine phosphoribosyltransferase family. PyrE subfamily. Homodimer. Mg(2+) serves as cofactor.

It carries out the reaction orotidine 5'-phosphate + diphosphate = orotate + 5-phospho-alpha-D-ribose 1-diphosphate. The protein operates within pyrimidine metabolism; UMP biosynthesis via de novo pathway; UMP from orotate: step 1/2. Its function is as follows. Catalyzes the transfer of a ribosyl phosphate group from 5-phosphoribose 1-diphosphate to orotate, leading to the formation of orotidine monophosphate (OMP). In Shigella sonnei (strain Ss046), this protein is Orotate phosphoribosyltransferase.